The following is a 1630-amino-acid chain: Histone transcription regulator 3 homolog (1630 aa).

The TPR 1 repeat unit spans residues 8–42; sequence NAASEDLDKEKRTLEIRIEEAVQIYQNALSAQKQG. Positions 325–347 are disordered; sequence KDIVPPPSDNLPKPQLLKRPIDD. The stretch at 1230-1263 is one TPR 2 repeat; it reads WRALYMLGKACRKCGDMENALVHFEAAAALAPTK.

It belongs to the HIR3 family. Interacts with hip1 and slm9.

It localises to the nucleus. Functionally, has a role in a nucleosome assembly pathway that is required for the integrity of heterochromatin and proper chromosome segregation. Required for transcriptional silencing in the outer repeat (otr) region of centromeric repeats and the Tf2 long terminal repeat retrotransposons. The sequence is that of Histone transcription regulator 3 homolog (hip3) from Schizosaccharomyces pombe (strain 972 / ATCC 24843) (Fission yeast).